Reading from the N-terminus, the 135-residue chain is Kappa-casein (135 aa).

O-linked (GalNAc...) threonine glycosylation is present at threonine 96. The residue at position 114 (serine 114) is a Phosphoserine; alternate. Serine 114 carries O-linked (GalNAc...) serine; alternate glycosylation. Residue threonine 131 is glycosylated (O-linked (GalNAc...) threonine). Serine 132 carries the post-translational modification Phosphoserine.

The protein belongs to the kappa-casein family. As to expression, mammary gland specific. Secreted in milk.

The protein localises to the secreted. Kappa-casein stabilizes micelle formation, preventing casein precipitation in milk. The polypeptide is Kappa-casein (CSN3) (Equus grevyi (Grevy's zebra)).